The following is a 268-amino-acid chain: N-formylmaleamate deformylase (268 aa).

The region spanning 28–251 (ALILVPGITS…NAGHMIPWDD (224 aa)) is the AB hydrolase-1 domain. Residues Ser101, Glu221, and His245 each act as charge relay system in the active site.

It carries out the reaction N-formylmaleamate + H2O = maleamate + formate + H(+). It participates in cofactor degradation; nicotinate degradation. Its function is as follows. Deformylase that catalyzes the conversion of N-formylmaleamic acid to maleamate in the aerobic nicotinate degradation pathway. The polypeptide is N-formylmaleamate deformylase (nicD) (Pseudomonas putida (strain ATCC 47054 / DSM 6125 / CFBP 8728 / NCIMB 11950 / KT2440)).